A 288-amino-acid chain; its full sequence is MKLQFTKMHGAGNDFIVLDGIHQKLDLTDAQWRALANRHFGIGADQILIVEKSSRDDVDFRYRIVNADGGEVEHCGNGARCFVRFVTDRGMTDKQSVRVEVMNGVITLKLQDDGQVTVDMGEPELTPARVPFIADGLPTRAEAQDTLYGLEVNGRTEWISPVSMGNPHAVQIVDDVEQFPVLQDGPVIEHHKSFPNRVNAGFMQIVDRNTVRLRVFERGAGETLACGTGACAAVVAGIRRGLLDSPVKVHTHGGDLTIAWQGAGQPVQMTGPATTVFEGTIDLSTLPA.

Residues Asn-13, Gln-46, and Asn-66 each coordinate substrate. Cys-75 serves as the catalytic Proton donor. Substrate-binding positions include 76–77 (GN), Asn-166, Asn-199, and 217–218 (ER). Catalysis depends on Cys-226, which acts as the Proton acceptor. 227–228 (GT) serves as a coordination point for substrate.

The protein belongs to the diaminopimelate epimerase family. In terms of assembly, homodimer.

It is found in the cytoplasm. It carries out the reaction (2S,6S)-2,6-diaminopimelate = meso-2,6-diaminopimelate. It functions in the pathway amino-acid biosynthesis; L-lysine biosynthesis via DAP pathway; DL-2,6-diaminopimelate from LL-2,6-diaminopimelate: step 1/1. Catalyzes the stereoinversion of LL-2,6-diaminopimelate (L,L-DAP) to meso-diaminopimelate (meso-DAP), a precursor of L-lysine and an essential component of the bacterial peptidoglycan. This Cupriavidus metallidurans (strain ATCC 43123 / DSM 2839 / NBRC 102507 / CH34) (Ralstonia metallidurans) protein is Diaminopimelate epimerase.